Consider the following 352-residue polypeptide: Tropomodulin-3 (352 aa).

At S25 the chain carries Phosphoserine.

Belongs to the tropomodulin family. Binds to the N-terminus of tropomyosin and to actin. Interacts with FLII. In terms of tissue distribution, ubiquitous.

It is found in the cytoplasm. The protein resides in the cytoskeleton. Blocks the elongation and depolymerization of the actin filaments at the pointed end. The Tmod/TM complex contributes to the formation of the short actin protofilament, which in turn defines the geometry of the membrane skeleton. In Homo sapiens (Human), this protein is Tropomodulin-3 (TMOD3).